Here is an 889-residue protein sequence, read N- to C-terminus: Chitin synthase I (889 aa).

N-linked (GlcNAc...) asparagine glycosylation is present at Asn-43. The tract at residues 94–138 (GEYFDGYNQGHPPQEHQAYDDDGQPLIEDQHGYSDNPQHQTQTPA) is disordered. Residues 126 to 137 (YSDNPQHQTQTP) are compositionally biased toward polar residues. N-linked (GlcNAc...) asparagine glycosylation occurs at Asn-199. The next 9 helical transmembrane spans lie at 431-451 (SAFG…YVAL), 530-550 (RWLN…YEFF), 560-580 (LAFF…WFAI), 606-626 (ILGV…FVLS), 641-661 (MVWF…FIAV), 687-707 (TLII…IIMF), 716-736 (FIQY…YAFC), 815-835 (GVVL…LSSA), and 861-881 (IVLW…MWFL).

It belongs to the chitin synthase family. Class I subfamily. Expressed in hyphal bodies.

The protein localises to the cell membrane. The enzyme catalyses [(1-&gt;4)-N-acetyl-beta-D-glucosaminyl](n) + UDP-N-acetyl-alpha-D-glucosamine = [(1-&gt;4)-N-acetyl-beta-D-glucosaminyl](n+1) + UDP + H(+). Functionally, polymerizes chitin, a structural polymer of the cell wall and septum, by transferring the sugar moiety of UDP-GlcNAc to the non-reducing end of the growing chitin polymer. Contributes to the production of conidia and the ability of fungal conidia to germinate. Not involved in fungal stress tolerances. The polypeptide is Chitin synthase I (Metarhizium acridum (strain CQMa 102)).